The primary structure comprises 284 residues: 4-diphosphocytidyl-2-C-methyl-D-erythritol kinase (284 aa).

K14 is an active-site residue. Residue 98 to 108 participates in ATP binding; sequence PMGGGLGGGSS. D140 is a catalytic residue.

It belongs to the GHMP kinase family. IspE subfamily.

It catalyses the reaction 4-CDP-2-C-methyl-D-erythritol + ATP = 4-CDP-2-C-methyl-D-erythritol 2-phosphate + ADP + H(+). It participates in isoprenoid biosynthesis; isopentenyl diphosphate biosynthesis via DXP pathway; isopentenyl diphosphate from 1-deoxy-D-xylulose 5-phosphate: step 3/6. Its function is as follows. Catalyzes the phosphorylation of the position 2 hydroxy group of 4-diphosphocytidyl-2C-methyl-D-erythritol. The protein is 4-diphosphocytidyl-2-C-methyl-D-erythritol kinase of Shewanella sp. (strain W3-18-1).